The following is a 1021-amino-acid chain: Ribosome quality control complex subunit 2 (1021 aa).

The stretch at 348 to 388 forms a coiled coil; sequence IEAQKLKKRAHDRLATAERRLESAKEDQARKLQSLQDAQAT. Residues 457–484 form a disordered region; it reads NPESVDNSDESSETSDDDLDDSDDDNKV. Acidic residues predominate over residues 462 to 480; that stretch reads DNSDESSETSDDDLDDSDD. S478 carries the post-translational modification Phosphoserine. 2 coiled-coil regions span residues 507–546 and 698–727; these read NARK…DLKR and DEKS…LKME. Polar residues-rich tracts occupy residues 746–761 and 839–856; these read YNED…TTGS and ISSQ…TPTA. 2 disordered regions span residues 746–801 and 832–905; these read YNED…TALE and HAAR…VESF. Residues 876 to 905 show a composition bias toward basic and acidic residues; it reads DQSRNSEAENEKGLSTEQRDEKKHAKVESF.

Belongs to the NEMF family. In terms of assembly, component of the ribosome quality control complex (RQC), composed of the E3 ubiquitin ligase rkr1/ltn1, rqc1 and mtr1/rqc2, as well as cdc48 and its ubiquitin-binding cofactors associated with the 60S ribosomal subunit. RQC2 binds to the 40S-binding surface of tRNAs.

It is found in the cytoplasm. In terms of biological role, key component of the ribosome quality control complex (RQC), a ribosome-associated complex that mediates the extraction of incompletely synthesized nascent chains from stalled ribosomes as well as their ubiquitin-mediated proteasomal degradation. Thereby, frees 60S subunit ribosomes from the stalled translation complex and prevents the accumulation of nascent polypeptide chains that are potentially toxic for the cell. Within the RQC complex, mtr1/rqc2 specifically binds stalled 60S ribosomal subunits by recognizing an exposed, nascent chain-conjugated tRNA moiety and promotes the recruitment of rkr1/ltn1 to stalled 60S subunits. Following binding to stalled 60S ribosomal subunits, mtr1/rqc2 mediates CAT tailing by recruiting alanine- and threonine-charged tRNA to the A-site and directing the elongation of stalled nascent chains independently of mRNA or 40S subunits, leading to non-templated C-terminal Ala and Thr extensions (CAT tails). CAT tails promote the rkr1/ltn1-mediated ubiquitination of incompletely synthesized nascent polypeptides: CAT tailing facilitates rkr1/ltn1-dependent ubiquitination by exposing lysine residues that would otherwise remain buried in the ribosomal exit tunnel. Following ubiquitination, incompletely synthesized nascent polypeptides are recognized by CDC48 and degraded by the proteasome. CAT-tailed proteins tend to aggregate and sequester chaperones and can induce proteotoxic stress; their rkr1/ltn1-dependent ubiquitination and degradation is required to prevent proteotoxic stress. This Schizosaccharomyces pombe (strain 972 / ATCC 24843) (Fission yeast) protein is Ribosome quality control complex subunit 2.